Reading from the N-terminus, the 220-residue chain is ATP synthase subunit 5, mitochondrial (220 aa).

This sequence belongs to the ATPase delta chain family. F-type ATPases have 2 components, CF(1) - the catalytic core - and CF(0) - the membrane proton channel. CF(1) has five subunits: alpha(3), beta(3), gamma(1), delta(1), epsilon(1). CF(0) has three main subunits: a, b and c.

It localises to the mitochondrion. Its subcellular location is the mitochondrion inner membrane. Mitochondrial membrane ATP synthase (F(1)F(0) ATP synthase or Complex V) produces ATP from ADP in the presence of a proton gradient across the membrane which is generated by electron transport complexes of the respiratory chain. F-type ATPases consist of two structural domains, F(1) - containing the extramembraneous catalytic core and F(0) - containing the membrane proton channel, linked together by a central stalk and a peripheral stalk. During catalysis, ATP synthesis in the catalytic domain of F(1) is coupled via a rotary mechanism of the central stalk subunits to proton translocation. Part of the complex F(0) domain and the peripheric stalk, which acts as a stator to hold the catalytic alpha(3)beta(3) subcomplex and subunit a/ATP6 static relative to the rotary elements. This chain is ATP synthase subunit 5, mitochondrial (atp-5), found in Neurospora crassa (strain ATCC 24698 / 74-OR23-1A / CBS 708.71 / DSM 1257 / FGSC 987).